A 256-amino-acid polypeptide reads, in one-letter code: Alcohol dehydrogenase (256 aa).

Position 12-35 (12-35 (FVAGLGGIGLDTSKELVKRDLKNL)) interacts with NAD(+). Residue Ser140 participates in substrate binding. Tyr153 serves as the catalytic Proton acceptor.

It belongs to the short-chain dehydrogenases/reductases (SDR) family. Homodimer.

It carries out the reaction a primary alcohol + NAD(+) = an aldehyde + NADH + H(+). The enzyme catalyses a secondary alcohol + NAD(+) = a ketone + NADH + H(+). The protein is Alcohol dehydrogenase (Adh) of Drosophila erecta (Fruit fly).